A 617-amino-acid polypeptide reads, in one-letter code: Pyrophosphate--fructose 6-phosphate 1-phosphotransferase subunit alpha 2 (617 aa).

Belongs to the phosphofructokinase type A (PFKA) family. PPi-dependent PFK group II subfamily. Clade 'Long' sub-subfamily. Tetramer of two alpha (regulatory) and two beta (catalytic) chains. In terms of tissue distribution, expressed in roots and specific parts such as the trichomes of leaves, cotyledon veins, as well as in stamen and gynoecium of flowers.

The protein localises to the cytoplasm. The protein operates within carbohydrate degradation; glycolysis; D-glyceraldehyde 3-phosphate and glycerone phosphate from D-glucose: step 3/4. Allosterically activated by fructose 2,6-bisphosphate. Regulatory subunit of pyrophosphate--fructose 6-phosphate 1-phosphotransferase. The polypeptide is Pyrophosphate--fructose 6-phosphate 1-phosphotransferase subunit alpha 2 (Arabidopsis thaliana (Mouse-ear cress)).